We begin with the raw amino-acid sequence, 273 residues long: Dermonecrotic toxin LapSicTox-alphaIB1c (273 aa).

The active site involves H5. The Mg(2+) site is built by E25 and D27. H41 (nucleophile) is an active-site residue. Intrachain disulfides connect C45-C51 and C47-C190. D85 is a Mg(2+) binding site. N250 carries an N-linked (GlcNAc...) asparagine glycan.

The protein belongs to the arthropod phospholipase D family. Class II subfamily. It depends on Mg(2+) as a cofactor. As to expression, expressed by the venom gland.

The protein localises to the secreted. The catalysed reaction is an N-(acyl)-sphingosylphosphocholine = an N-(acyl)-sphingosyl-1,3-cyclic phosphate + choline. The enzyme catalyses an N-(acyl)-sphingosylphosphoethanolamine = an N-(acyl)-sphingosyl-1,3-cyclic phosphate + ethanolamine. It catalyses the reaction a 1-acyl-sn-glycero-3-phosphocholine = a 1-acyl-sn-glycero-2,3-cyclic phosphate + choline. It carries out the reaction a 1-acyl-sn-glycero-3-phosphoethanolamine = a 1-acyl-sn-glycero-2,3-cyclic phosphate + ethanolamine. Its function is as follows. Dermonecrotic toxins cleave the phosphodiester linkage between the phosphate and headgroup of certain phospholipids (sphingolipid and lysolipid substrates), forming an alcohol (often choline) and a cyclic phosphate. This toxin acts on sphingomyelin (SM). It may also act on ceramide phosphoethanolamine (CPE), lysophosphatidylcholine (LPC) and lysophosphatidylethanolamine (LPE), but not on lysophosphatidylserine (LPS), and lysophosphatidylglycerol (LPG). It acts by transphosphatidylation, releasing exclusively cyclic phosphate products as second products. Induces dermonecrosis, hemolysis, increased vascular permeability, edema, inflammatory response, and platelet aggregation. This Loxosceles apachea (Apache recluse spider) protein is Dermonecrotic toxin LapSicTox-alphaIB1c.